The chain runs to 429 residues: Phosphoglucosamine mutase (429 aa).

S96 functions as the Phosphoserine intermediate in the catalytic mechanism. Mg(2+) contacts are provided by S96, D230, D232, and D234. S96 carries the post-translational modification Phosphoserine.

This sequence belongs to the phosphohexose mutase family. The cofactor is Mg(2+). Post-translationally, activated by phosphorylation.

It carries out the reaction alpha-D-glucosamine 1-phosphate = D-glucosamine 6-phosphate. Its function is as follows. Catalyzes the conversion of glucosamine-6-phosphate to glucosamine-1-phosphate. The chain is Phosphoglucosamine mutase from Thermotoga maritima (strain ATCC 43589 / DSM 3109 / JCM 10099 / NBRC 100826 / MSB8).